The chain runs to 167 residues: Endoribonuclease YbeY (167 aa).

Residues His132, His136, and His142 each contribute to the Zn(2+) site.

This sequence belongs to the endoribonuclease YbeY family. Requires Zn(2+) as cofactor.

The protein localises to the cytoplasm. Functionally, single strand-specific metallo-endoribonuclease involved in late-stage 70S ribosome quality control and in maturation of the 3' terminus of the 16S rRNA. In Clostridium beijerinckii (strain ATCC 51743 / NCIMB 8052) (Clostridium acetobutylicum), this protein is Endoribonuclease YbeY.